The sequence spans 440 residues: Chromosome partition protein MukF (440 aa).

Residues 208–236 form a leucine-zipper region; sequence LDETSGNLRELQDTLNAAGDKLQSQLLRI.

The protein belongs to the MukF family. In terms of assembly, interacts, and probably forms a ternary complex, with MukE and MukB via its C-terminal region. The complex formation is stimulated by calcium or magnesium. It is required for an interaction between MukE and MukB.

Its subcellular location is the cytoplasm. It localises to the nucleoid. Its function is as follows. Involved in chromosome condensation, segregation and cell cycle progression. May participate in facilitating chromosome segregation by condensation DNA from both sides of a centrally located replisome during cell division. Not required for mini-F plasmid partitioning. Probably acts via its interaction with MukB and MukE. Overexpression results in anucleate cells. It has a calcium binding activity. This chain is Chromosome partition protein MukF, found in Histophilus somni (strain 129Pt) (Haemophilus somnus).